Reading from the N-terminus, the 480-residue chain is Ochratoxinase (480 aa).

Zn(2+) is bound by residues H111, H113, K246, H287, and H307. The active site involves K246. Residue D378 is part of the active site.

This sequence belongs to the metallo-dependent hydrolases superfamily. Ochratoxinase amidase 2 family. As to quaternary structure, homooctamer. Zn(2+) serves as cofactor.

It is found in the secreted. The enzyme catalyses ochratoxin A + H2O = ochratoxin alpha + L-phenylalanine. Its activity is regulated as follows. The Zn(2+)-specific chelator 1,10-phenanthroline inhibits the enzyme activity. Functionally, carboxypeptidase that catalyzes the release of a C-terminal amino acid with specific catalytic activity for aromatic amino acids such as phenylalanine. Is able to degrade ochratoxin A, one of the five major mycotoxins most harmful to humans and animals that is produced by Aspergillus and Penicillium species and occurs in a wide range of agricultural products. This chain is Ochratoxinase, found in Aspergillus niger (strain ATCC MYA-4892 / CBS 513.88 / FGSC A1513).